A 146-amino-acid chain; its full sequence is Large ribosomal subunit protein uL15 (146 aa).

The segment covering 1–18 has biased composition (basic and acidic residues); it reads MKLHELKAAEGTRKERNR. Residues 1-58 form a disordered region; it reads MKLHELKAAEGTRKERNRVGRGMSSGNGKTSGRGHKGQKARSGGGVRPGFEGGQMPLF. A compositionally biased stretch (gly residues) spans 42–52; that stretch reads SGGGVRPGFEG.

It belongs to the universal ribosomal protein uL15 family. As to quaternary structure, part of the 50S ribosomal subunit.

Its function is as follows. Binds to the 23S rRNA. This chain is Large ribosomal subunit protein uL15, found in Oceanobacillus iheyensis (strain DSM 14371 / CIP 107618 / JCM 11309 / KCTC 3954 / HTE831).